The chain runs to 494 residues: Trigger factor (494 aa).

One can recognise a PPIase FKBP-type domain in the interval 169 to 254; sequence GDRITMDYVG…VKEVAAPADV (86 aa). The segment at 441–494 is disordered; it reads LAEEEGEAKAETKKAAPKKKAAAKAEAADAGEGEEAAPKKKAAPKKKAADESAE.

Belongs to the FKBP-type PPIase family. Tig subfamily.

Its subcellular location is the cytoplasm. It carries out the reaction [protein]-peptidylproline (omega=180) = [protein]-peptidylproline (omega=0). In terms of biological role, involved in protein export. Acts as a chaperone by maintaining the newly synthesized protein in an open conformation. Functions as a peptidyl-prolyl cis-trans isomerase. In Rhizobium johnstonii (strain DSM 114642 / LMG 32736 / 3841) (Rhizobium leguminosarum bv. viciae), this protein is Trigger factor.